Here is a 313-residue protein sequence, read N- to C-terminus: MEKRLLDFEVGETVDLFLLIKSSVKGTASNGKPFLSLVLQDKSGELEAKLWDVKESDEANYGVQQIVHLMGDIQNYRGRKQLKIRQIRQATALDGVSASEFMETAPINKEEMADEITQYIFEMKNANLQRITRALLKKYQDDFYDYPAAMRHHHEFVSGLSFHVVSMLRLAKSVADLYPSVNRDLLYAGVILHDLGKVIELSGPVSTTYTLEGNLIGHISIVVEEVSKIADELSIDGEEVVVLKHVLLSHHGKGEWGSPKPPLVREAEILHQIDLMDASLNMMDKVLKHTKPGEFSERVFGLDNRSFYNPIFE.

Positions 163 to 279 (HVVSMLRLAK…LHQIDLMDAS (117 aa)) constitute an HD domain.

This sequence belongs to the YhaM family.

Its function is as follows. Shows a 3'-5' exoribonuclease activity. This Listeria monocytogenes serotype 4b (strain CLIP80459) protein is 3'-5' exoribonuclease YhaM.